The chain runs to 609 residues: DNA mismatch repair protein MutL (609 aa).

Belongs to the DNA mismatch repair MutL/HexB family.

Functionally, this protein is involved in the repair of mismatches in DNA. It is required for dam-dependent methyl-directed DNA mismatch repair. May act as a 'molecular matchmaker', a protein that promotes the formation of a stable complex between two or more DNA-binding proteins in an ATP-dependent manner without itself being part of a final effector complex. The polypeptide is DNA mismatch repair protein MutL (Rickettsia felis (strain ATCC VR-1525 / URRWXCal2) (Rickettsia azadi)).